The primary structure comprises 161 residues: Cytochrome b6-f complex subunit 4 (161 aa).

3 helical membrane-spanning segments follow: residues 37–57 (LLYIFPVVILGSIALCVGLAV), 96–116 (LLGVVLMGSIPLGLMLVPFIE), and 132–152 (TVFLFGTLFTLWLGIGATFPI).

The protein belongs to the cytochrome b family. PetD subfamily. In terms of assembly, the 4 large subunits of the cytochrome b6-f complex are cytochrome b6, subunit IV (17 kDa polypeptide, PetD), cytochrome f and the Rieske protein, while the 4 small subunits are PetG, PetL, PetM and PetN. The complex functions as a dimer.

Its subcellular location is the cellular thylakoid membrane. Component of the cytochrome b6-f complex, which mediates electron transfer between photosystem II (PSII) and photosystem I (PSI), cyclic electron flow around PSI, and state transitions. This is Cytochrome b6-f complex subunit 4 from Cyanothece sp. (strain PCC 7425 / ATCC 29141).